The primary structure comprises 591 residues: Inactive metallocarboxypeptidase ECM14 (591 aa).

Positions 1 to 21 (MRLFAHLAVLAILACAVPITA) are cleaved as a signal peptide. The propeptide occupies 22-175 (IPSFLSNSYP…QTIYESYPSS (154 aa)). Positions 203–523 (DYQPFSVIVP…NAVMVLGRFL (321 aa)) constitute a Peptidase M14 domain. Residues H265 and E268 each coordinate Zn(2+). Residues 265-268 (HARE), R323, and 340-341 (DR) each bind substrate. Cysteines 334 and 357 form a disulfide. N-linked (GlcNAc...) asparagine glycosylation is found at N350, N381, and N386. Residue H397 participates in Zn(2+) binding. A substrate-binding site is contributed by 398-399 (SY). The disordered stretch occupies residues 533-591 (DWEDESQRPKAGEDDIPSDNELDENDDSWIPYDYRNHDDQNEGEGYDNDEWGFRRRRKR). Composition is skewed to acidic residues over residues 546–559 (DDIPSDNELDENDD) and 573–582 (NEGEGYDNDE).

It belongs to the peptidase M14 family. Requires Zn(2+) as cofactor.

It localises to the vacuole. The protein resides in the secreted. Functionally, inactive carboxypeptidase that may play a role in cell wall organization and biogenesis. The protein is Inactive metallocarboxypeptidase ECM14 (ECM14) of Paracoccidioides brasiliensis (strain Pb03).